Consider the following 446-residue polypeptide: Argininosuccinate lyase (446 aa).

This sequence belongs to the lyase 1 family. Argininosuccinate lyase subfamily.

Its subcellular location is the cytoplasm. It catalyses the reaction 2-(N(omega)-L-arginino)succinate = fumarate + L-arginine. The protein operates within amino-acid biosynthesis; L-arginine biosynthesis; L-arginine from L-ornithine and carbamoyl phosphate: step 3/3. In Bacteroides thetaiotaomicron (strain ATCC 29148 / DSM 2079 / JCM 5827 / CCUG 10774 / NCTC 10582 / VPI-5482 / E50), this protein is Argininosuccinate lyase.